Consider the following 277-residue polypeptide: Phosphatidylglycerol--prolipoprotein diacylglyceryl transferase (277 aa).

4 helical membrane-spanning segments follow: residues 18 to 38, 51 to 71, 89 to 109, and 116 to 136; these read ISVK…LLLA, IIVD…RIYY, IWHG…TAVI, and ISFW…QAIG. An a 1,2-diacyl-sn-glycero-3-phospho-(1'-sn-glycerol)-binding site is contributed by arginine 137. The next 3 membrane-spanning stretches (helical) occupy residues 177–197, 205–225, and 235–255; these read QPTF…LLII, GELF…IEGM, and FRVS…LIIY.

Belongs to the Lgt family.

It is found in the cell membrane. The catalysed reaction is L-cysteinyl-[prolipoprotein] + a 1,2-diacyl-sn-glycero-3-phospho-(1'-sn-glycerol) = an S-1,2-diacyl-sn-glyceryl-L-cysteinyl-[prolipoprotein] + sn-glycerol 1-phosphate + H(+). Its pathway is protein modification; lipoprotein biosynthesis (diacylglyceryl transfer). Functionally, catalyzes the transfer of the diacylglyceryl group from phosphatidylglycerol to the sulfhydryl group of the N-terminal cysteine of a prolipoprotein, the first step in the formation of mature lipoproteins. The protein is Phosphatidylglycerol--prolipoprotein diacylglyceryl transferase of Listeria innocua serovar 6a (strain ATCC BAA-680 / CLIP 11262).